A 262-amino-acid chain; its full sequence is Ribose-5-phosphate isomerase A (262 aa).

Residues T33 to T36, D89 to D92, and K102 to G105 contribute to the substrate site. E111 (proton acceptor) is an active-site residue. A substrate-binding site is contributed by K129.

The protein belongs to the ribose 5-phosphate isomerase family. Homodimer.

It carries out the reaction aldehydo-D-ribose 5-phosphate = D-ribulose 5-phosphate. Its pathway is carbohydrate degradation; pentose phosphate pathway; D-ribose 5-phosphate from D-ribulose 5-phosphate (non-oxidative stage): step 1/1. Its function is as follows. Catalyzes the reversible conversion of ribose-5-phosphate to ribulose 5-phosphate. The chain is Ribose-5-phosphate isomerase A from Ruegeria sp. (strain TM1040) (Silicibacter sp.).